The primary structure comprises 72 residues: uncharacterized protein (72 aa).

It belongs to the asfivirus I73R family.

The protein localises to the virion. This is an uncharacterized protein from Ornithodoros (relapsing fever ticks).